The chain runs to 435 residues: ATP-dependent protease ATPase subunit HslU (435 aa).

Residues Ile-18, 60–65 (GVGKTE), Asp-248, Glu-313, and Arg-385 each bind ATP.

Belongs to the ClpX chaperone family. HslU subfamily. As to quaternary structure, a double ring-shaped homohexamer of HslV is capped on each side by a ring-shaped HslU homohexamer. The assembly of the HslU/HslV complex is dependent on binding of ATP.

Its subcellular location is the cytoplasm. In terms of biological role, ATPase subunit of a proteasome-like degradation complex; this subunit has chaperone activity. The binding of ATP and its subsequent hydrolysis by HslU are essential for unfolding of protein substrates subsequently hydrolyzed by HslV. HslU recognizes the N-terminal part of its protein substrates and unfolds these before they are guided to HslV for hydrolysis. This Allorhizobium ampelinum (strain ATCC BAA-846 / DSM 112012 / S4) (Agrobacterium vitis (strain S4)) protein is ATP-dependent protease ATPase subunit HslU.